The sequence spans 315 residues: Olfactory receptor 11A1 (315 aa).

The Extracellular segment spans residues 1-27 (MEIVSTGNETITEFVLLGFYDIPELHF). Asn8 carries N-linked (GlcNAc...) asparagine glycosylation. A helical transmembrane segment spans residues 28-48 (LFFIVFTAVYVFIIIGNMLII). At 49-56 (VAVVSSQR) the chain is on the cytoplasmic side. A helical transmembrane segment spans residues 57–77 (LHKPMYIFLANLSFLDILYTS). Topologically, residues 78 to 100 (AVMPKMLEGFLQEATISVAGCLL) are extracellular. Residues Cys98 and Cys190 are joined by a disulfide bond. Residues 101-121 (QFFIFGSLATAECLLLAVMAY) traverse the membrane as a helical segment. Topologically, residues 122-140 (DRYLAICYPLHYPLLMGPR) are cytoplasmic. The helical transmembrane segment at 141–161 (RYMGLVVTTWLSGFVVDGLVV) threads the bilayer. Residues 162 to 198 (ALVAQLRFCGPNHIDQFYCDFMLFVGLACSDPRVAQV) lie on the Extracellular side of the membrane. The chain crosses the membrane as a helical span at residues 199 to 218 (TTLILSVFCLTIPFGLILTS). The Cytoplasmic segment spans residues 219-238 (YARIVVAVLRVPAGASRRRA). The helical transmembrane segment at 239–259 (FSTCSSHLAVVTTFYGTLMIF) threads the bilayer. Residues 260–272 (YVAPSAVHSQLLS) lie on the Extracellular side of the membrane. A helical transmembrane segment spans residues 273–293 (KVFSLLYTVVTPLFNPVIYTM). Residues 294–315 (RNKEVHQALRKILCIKQTETLD) are Cytoplasmic-facing.

This sequence belongs to the G-protein coupled receptor 1 family.

Its subcellular location is the cell membrane. Functionally, odorant receptor. The chain is Olfactory receptor 11A1 (OR11A1) from Homo sapiens (Human).